A 333-amino-acid chain; its full sequence is Sodium/bile acid cotransporter 7 (333 aa).

The Cytoplasmic segment spans residues 1–10; it reads MGLLERLRKE. A helical transmembrane segment spans residues 11–31; it reads WFIAGIALVIAAARLEPAVGV. Topologically, residues 32 to 37 are extracellular; sequence KGGPLK. A helical transmembrane segment spans residues 38-58; the sequence is PEITITYIAVSAIFFNSGLSL. Residues 59–71 are Cytoplasmic-facing; it reads KTEELTSALMHVK. A helical transmembrane segment spans residues 72–92; the sequence is LHLFVQIFTLVFFPTAIWLFL. At 93–103 the chain is on the extracellular side; that stretch reads QLLSITPINEW. A helical transmembrane segment spans residues 104–124; sequence LLKGLQTVGCMPPPVSSAVIL. The Cytoplasmic portion of the chain corresponds to 125–126; that stretch reads TK. Residues 127–147 traverse the membrane as a helical segment; sequence AVGGNEAAAIFNSAFGSFLLG. The Extracellular portion of the chain corresponds to 148 to 151; sequence SSSS. A helical membrane pass occupies residues 152–172; that stretch reads VPFTSIFSQLFMTVVVPLIIG. At 173-189 the chain is on the cytoplasmic side; sequence QIVRRYIKDWLERRKPP. Residues 190-210 traverse the membrane as a helical segment; sequence FGTISSCVLLMIIYTTFCDTF. Topologically, residues 211 to 222 are extracellular; it reads ANPNIDLDKFSL. A helical transmembrane segment spans residues 223–243; that stretch reads IIIVFIIFSVQMSFMFLTFLF. Residues 244–258 are Cytoplasmic-facing; sequence STRSNSGFTPADTVA. A helical transmembrane segment spans residues 259–279; that stretch reads IIFCSTHKSLTLGIPMLKIVF. The Extracellular portion of the chain corresponds to 280-286; the sequence is AGYEHLS. A helical membrane pass occupies residues 287–307; the sequence is LISVPLLIYHPAQILLGSLLV. The Cytoplasmic portion of the chain corresponds to 308–333; that stretch reads PTIKSWMVSRQKALKLTRQPKVPVKV.

This sequence belongs to the bile acid:sodium symporter (BASS) (TC 2.A.28) family.

It is found in the cell membrane. The protein resides in the endoplasmic reticulum membrane. The protein localises to the golgi apparatus membrane. In terms of biological role, involved in teeth and skeletal development. Has an essential role in the biosynthesis and trafficking of glycosaminoglycans and glycoproteins to produce a proper functioning extracellular matrix. Required for extracellular matrix mineralization. Also involved in the regulation of cellular calcium homeostasis. Does not show transport activity towards bile acids or steroid sulfates. This chain is Sodium/bile acid cotransporter 7 (SLC10A7), found in Gallus gallus (Chicken).